The following is a 409-amino-acid chain: Growth-regulating factor 8 (409 aa).

Composition is skewed to gly residues over residues 1–10 and 27–36; these read MLSSCGGHGH and QQGGGGGGGQ. Positions 1-81 are disordered; it reads MLSSCGGHGH…GGGGQMLSFS (81 aa). Over residues 56–68 the composition is skewed to low complexity; the sequence is SSSSFLGSTSSSC. The QLQ domain occupies 107-142; it reads PFTPTQWMELEHQALIYKHIAANVSVPSSLLLPIRR. Residues 158-202 enclose the WRC domain; that stretch reads DVEPRRCRRTDGKKWRCSRDAVGDQKYCERHINRGRHRSRKHVEG. Short sequence motifs (bipartite nuclear localization signal) lie at residues 163–173 and 191–198; these read RCRRTDGKKWR and RGRHRSRK. The disordered stretch occupies residues 221–242; sequence SSRGHTVARQKQVKGSAATVSD.

It belongs to the GRF family.

Its subcellular location is the nucleus. In terms of biological role, transcription activator that plays a regulatory role in gibberellin-induced stem elongation. This is Growth-regulating factor 8 (GRF8) from Oryza sativa subsp. japonica (Rice).